Here is a 387-residue protein sequence, read N- to C-terminus: S-adenosylmethionine synthase (387 aa).

H16 is an ATP binding site. D18 serves as a coordination point for Mg(2+). A K(+)-binding site is contributed by E44. E57 and Q100 together coordinate L-methionine. Positions Q100–E110 are flexible loop. ATP is bound by residues D165–K167, D241, R247–K248, A264, and K268. D241 is an L-methionine binding site. L-methionine is bound at residue K272.

This sequence belongs to the AdoMet synthase family. In terms of assembly, homotetramer; dimer of dimers. Mg(2+) serves as cofactor. K(+) is required as a cofactor.

The protein resides in the cytoplasm. The catalysed reaction is L-methionine + ATP + H2O = S-adenosyl-L-methionine + phosphate + diphosphate. It participates in amino-acid biosynthesis; S-adenosyl-L-methionine biosynthesis; S-adenosyl-L-methionine from L-methionine: step 1/1. Functionally, catalyzes the formation of S-adenosylmethionine (AdoMet) from methionine and ATP. The overall synthetic reaction is composed of two sequential steps, AdoMet formation and the subsequent tripolyphosphate hydrolysis which occurs prior to release of AdoMet from the enzyme. This is S-adenosylmethionine synthase from Marinomonas sp. (strain MWYL1).